Here is a 984-residue protein sequence, read N- to C-terminus: Glycine dehydrogenase (decarboxylating) (984 aa).

Lysine 702 bears the N6-(pyridoxal phosphate)lysine mark.

Belongs to the GcvP family. As to quaternary structure, the glycine cleavage system is composed of four proteins: P, T, L and H. Requires pyridoxal 5'-phosphate as cofactor.

It carries out the reaction N(6)-[(R)-lipoyl]-L-lysyl-[glycine-cleavage complex H protein] + glycine + H(+) = N(6)-[(R)-S(8)-aminomethyldihydrolipoyl]-L-lysyl-[glycine-cleavage complex H protein] + CO2. The glycine cleavage system catalyzes the degradation of glycine. The P protein binds the alpha-amino group of glycine through its pyridoxal phosphate cofactor; CO(2) is released and the remaining methylamine moiety is then transferred to the lipoamide cofactor of the H protein. The polypeptide is Glycine dehydrogenase (decarboxylating) (Xanthomonas oryzae pv. oryzae (strain MAFF 311018)).